The sequence spans 302 residues: Glycine--tRNA ligase alpha subunit (302 aa).

It belongs to the class-II aminoacyl-tRNA synthetase family. Tetramer of two alpha and two beta subunits.

It is found in the cytoplasm. The enzyme catalyses tRNA(Gly) + glycine + ATP = glycyl-tRNA(Gly) + AMP + diphosphate. This is Glycine--tRNA ligase alpha subunit from Haemophilus influenzae (strain 86-028NP).